Consider the following 358-residue polypeptide: Uroporphyrinogen decarboxylase (358 aa).

Residues arginine 27 to arginine 31, aspartate 77, tyrosine 154, serine 209, and histidine 330 each bind substrate.

It belongs to the uroporphyrinogen decarboxylase family. In terms of assembly, homodimer.

It localises to the cytoplasm. It carries out the reaction uroporphyrinogen III + 4 H(+) = coproporphyrinogen III + 4 CO2. It functions in the pathway porphyrin-containing compound metabolism; protoporphyrin-IX biosynthesis; coproporphyrinogen-III from 5-aminolevulinate: step 4/4. In terms of biological role, catalyzes the decarboxylation of four acetate groups of uroporphyrinogen-III to yield coproporphyrinogen-III. This chain is Uroporphyrinogen decarboxylase, found in Acinetobacter baylyi (strain ATCC 33305 / BD413 / ADP1).